The following is a 1043-amino-acid chain: Integrator complex subunit 3 (1043 aa).

Position 1 is an N-acetylmethionine (methionine 1). A phosphoserine mark is found at serine 502, serine 537, and serine 995. Positions 977-1043 (YEDSSTKPPK…GSSAVGSDSD (67 aa)) are disordered. Positions 1008–1022 (AEEESGSSSASEEED) are enriched in acidic residues.

Belongs to the Integrator subunit 3 family. As to quaternary structure, component of the Integrator complex, composed of core subunits INTS1, INTS2, INTS3, INTS4, INTS5, INTS6, INTS7, INTS8, INTS9/RC74, INTS10, INTS11/CPSF3L, INTS12, INTS13, INTS14 and INTS15. The core complex associates with protein phosphatase 2A subunits PPP2CA and PPP2R1A, to form the Integrator-PP2A (INTAC) complex. Component of the SOSS complex, composed of SOSS-B (SOSS-B1/NABP2 or SOSS-B2/NABP1), SOSS-A/INTS3 and SOSS-C/INIP. SOSS complexes containing SOSS-B1/NABP2 are more abundant than complexes containing SOSS-B2/NABP1. Interacts with SOSS-B1/NABP2, SOSS-B2/NABP1 and SOSS-C/INIP; the interaction is direct. Interacts with NBN/NBS1.

It localises to the nucleus. The protein resides in the cytoplasm. Component of the integrator complex, a multiprotein complex that terminates RNA polymerase II (Pol II) transcription in the promoter-proximal region of genes. The integrator complex provides a quality checkpoint during transcription elongation by driving premature transcription termination of transcripts that are unfavorably configured for transcriptional elongation: the complex terminates transcription by (1) catalyzing dephosphorylation of the C-terminal domain (CTD) of Pol II subunit POLR2A/RPB1 and SUPT5H/SPT5, (2) degrading the exiting nascent RNA transcript via endonuclease activity and (3) promoting the release of Pol II from bound DNA. The integrator complex is also involved in terminating the synthesis of non-coding Pol II transcripts, such as enhancer RNAs (eRNAs), small nuclear RNAs (snRNAs), telomerase RNAs and long non-coding RNAs (lncRNAs). Within the integrator complex, INTS3 is involved in the post-termination step: INTS3 binds INTS7 in the open conformation of integrator complex and prevents the rebinding of Pol II to the integrator after termination cycle. Mediates recruitment of cytoplasmic dynein to the nuclear envelope, probably as component of the integrator complex. In terms of biological role, component of the SOSS complex, a multiprotein complex that functions downstream of the MRN complex to promote DNA repair and G2/M checkpoint. The SOSS complex associates with single-stranded DNA at DNA lesions and influences diverse endpoints in the cellular DNA damage response including cell-cycle checkpoint activation, recombinational repair and maintenance of genomic stability. The SOSS complex is required for efficient homologous recombination-dependent repair of double-strand breaks (DSBs) and ATM-dependent signaling pathways. In the SOSS complex, it is required for the assembly of the complex and for stabilization of the complex at DNA damage sites. The polypeptide is Integrator complex subunit 3 (Homo sapiens (Human)).